The following is a 296-amino-acid chain: 33 kDa chaperonin (296 aa).

Intrachain disulfides connect cysteine 238–cysteine 240 and cysteine 271–cysteine 274.

The protein belongs to the HSP33 family. Post-translationally, under oxidizing conditions two disulfide bonds are formed involving the reactive cysteines. Under reducing conditions zinc is bound to the reactive cysteines and the protein is inactive.

The protein localises to the cytoplasm. In terms of biological role, redox regulated molecular chaperone. Protects both thermally unfolding and oxidatively damaged proteins from irreversible aggregation. Plays an important role in the bacterial defense system toward oxidative stress. In Clostridium botulinum (strain Loch Maree / Type A3), this protein is 33 kDa chaperonin.